The primary structure comprises 225 residues: Phosphoribosylformylglycinamidine synthase subunit PurQ (225 aa).

Residues 5–225 (RFGIVVFPGS…WQSIVQSLAG (221 aa)) enclose the Glutamine amidotransferase type-1 domain. The Nucleophile role is filled by Cys-89. Residues His-198 and Glu-200 contribute to the active site.

Part of the FGAM synthase complex composed of 1 PurL, 1 PurQ and 2 PurS subunits.

It is found in the cytoplasm. It catalyses the reaction N(2)-formyl-N(1)-(5-phospho-beta-D-ribosyl)glycinamide + L-glutamine + ATP + H2O = 2-formamido-N(1)-(5-O-phospho-beta-D-ribosyl)acetamidine + L-glutamate + ADP + phosphate + H(+). It carries out the reaction L-glutamine + H2O = L-glutamate + NH4(+). Its pathway is purine metabolism; IMP biosynthesis via de novo pathway; 5-amino-1-(5-phospho-D-ribosyl)imidazole from N(2)-formyl-N(1)-(5-phospho-D-ribosyl)glycinamide: step 1/2. In terms of biological role, part of the phosphoribosylformylglycinamidine synthase complex involved in the purines biosynthetic pathway. Catalyzes the ATP-dependent conversion of formylglycinamide ribonucleotide (FGAR) and glutamine to yield formylglycinamidine ribonucleotide (FGAM) and glutamate. The FGAM synthase complex is composed of three subunits. PurQ produces an ammonia molecule by converting glutamine to glutamate. PurL transfers the ammonia molecule to FGAR to form FGAM in an ATP-dependent manner. PurS interacts with PurQ and PurL and is thought to assist in the transfer of the ammonia molecule from PurQ to PurL. The sequence is that of Phosphoribosylformylglycinamidine synthase subunit PurQ from Synechococcus sp. (strain JA-3-3Ab) (Cyanobacteria bacterium Yellowstone A-Prime).